Here is a 90-residue protein sequence, read N- to C-terminus: Small ribosomal subunit protein uS17 (90 aa).

Belongs to the universal ribosomal protein uS17 family. In terms of assembly, part of the 30S ribosomal subunit.

Its function is as follows. One of the primary rRNA binding proteins, it binds specifically to the 5'-end of 16S ribosomal RNA. The chain is Small ribosomal subunit protein uS17 from Acidiphilium cryptum (strain JF-5).